The primary structure comprises 448 residues: MKHRYLPATDQDKKEMLEAIGVERIDELFSDIPESVRFKGEYQIKKAKSETELTKELTKLAAKNKDTVTYASFLGAGVYDHYQPVIVDHVISRSEFYTAYTPYQPEISQGELQAIFEFQTMICELTGMDISNSSMYDGGTALAEAAMLASGHTKKKKIVVSETVHPESREVLKTYAKGQYIDVVEVPSKNGTADLEALDEAVCEDTAAVIVQYPNFFGRIEPLKDIKPIAHKGKSMFIVSANPLALGLLTPPGALGADIVVGDAQPFGIPAAFGGPHCGFFAVTKKLMRKVPGRLVGQTEDENGKRGFVLTLQAREQHIRRDKATSNICSNQALNALAASVAMTALGKKGVKEIAWQNLQKAAYAKEAAKRAGLEVAFEGPMFNEFVIRLNEPVEKANERLLEKNIIGGYDLGASYPDLKRHMLIAVTELRTKEEIDTLMNELGDCHE.

Belongs to the GcvP family. N-terminal subunit subfamily. The glycine cleavage system is composed of four proteins: P, T, L and H. In this organism, the P 'protein' is a heterodimer of two subunits.

It catalyses the reaction N(6)-[(R)-lipoyl]-L-lysyl-[glycine-cleavage complex H protein] + glycine + H(+) = N(6)-[(R)-S(8)-aminomethyldihydrolipoyl]-L-lysyl-[glycine-cleavage complex H protein] + CO2. In terms of biological role, the glycine cleavage system catalyzes the degradation of glycine. The P protein binds the alpha-amino group of glycine through its pyridoxal phosphate cofactor; CO(2) is released and the remaining methylamine moiety is then transferred to the lipoamide cofactor of the H protein. The chain is Probable glycine dehydrogenase (decarboxylating) subunit 1 from Bacillus licheniformis (strain ATCC 14580 / DSM 13 / JCM 2505 / CCUG 7422 / NBRC 12200 / NCIMB 9375 / NCTC 10341 / NRRL NRS-1264 / Gibson 46).